The primary structure comprises 307 residues: Aspartate carbamoyltransferase catalytic subunit (307 aa).

Carbamoyl phosphate is bound by residues R49 and T50. Residue K77 coordinates L-aspartate. Positions 99, 127, and 130 each coordinate carbamoyl phosphate. L-aspartate is bound by residues R160 and R211. The carbamoyl phosphate site is built by A250 and P251.

This sequence belongs to the aspartate/ornithine carbamoyltransferase superfamily. ATCase family. As to quaternary structure, heterododecamer (2C3:3R2) of six catalytic PyrB chains organized as two trimers (C3), and six regulatory PyrI chains organized as three dimers (R2).

It carries out the reaction carbamoyl phosphate + L-aspartate = N-carbamoyl-L-aspartate + phosphate + H(+). Its pathway is pyrimidine metabolism; UMP biosynthesis via de novo pathway; (S)-dihydroorotate from bicarbonate: step 2/3. Functionally, catalyzes the condensation of carbamoyl phosphate and aspartate to form carbamoyl aspartate and inorganic phosphate, the committed step in the de novo pyrimidine nucleotide biosynthesis pathway. This is Aspartate carbamoyltransferase catalytic subunit from Bacillus pumilus (strain SAFR-032).